The primary structure comprises 464 residues: Transcription factor EAT1 (464 aa).

The tract at residues 261–274 (GKGKANFATERERR) is basic motif; degenerate. A bHLH domain is found at 261-310 (GKGKANFATERERREQLNVKFRTLRMLFPNPTKNDRASIVGDAIEYIDEL). The helix-loop-helix motif stretch occupies residues 275–310 (EQLNVKFRTLRMLFPNPTKNDRASIVGDAIEYIDEL). Positions 338–357 (QEAAADGESSSMRPVRDDQD) are disordered.

This sequence belongs to the bHLH protein family. As to quaternary structure, interacts with TDR.

Its subcellular location is the nucleus. Transcription factor involved in the regulation of tapetum programmed cell death (PCD) and degradation during male reproductive development. Interacts with TDR and promote tapetal PCD by regulating the expression of RTS, and the two lipid-transfer proteins C4 and C6, which function in microspore development. Acts downstream from and interacts with TDR in the regulation of tapetal PCD. Regulates directly the aspartic protease AP25 and AP37 during tapetal PCD. May not target the cysteine protease CP1. This Oryza sativa subsp. japonica (Rice) protein is Transcription factor EAT1.